The sequence spans 449 residues: Rubisco accumulation factor 1.2, chloroplastic (449 aa).

A chloroplast-targeting transit peptide spans 1–61 (MFSLKSLISS…NMIPKNPPAR (61 aa)). The tract at residues 75 to 264 (IPTQFRSLDS…KAKNRLNTEL (190 aa)) is N-terminal alpha-helix. Residues 262-288 (TELYGDKEAEKEKEKKKKEEEVKAIRI) are a coiled coil. A C-terminal beta sheet region spans residues 288-434 (IPVVRLKFGE…GMVVLVVRPP (147 aa)).

The protein belongs to the RAF family. Homodimer.

The protein resides in the plastid. It is found in the chloroplast. Required for assembly or stability of RuBisCO. Acts at a postchaperonin step to fold and/or assemble the large subunit (rbcL) into RuBisCO. RAF1 brackets an rbcL dimer (rbcL(2)), leading to rbcL(8)-RAF1(4) complex formation. In the next step, RBCS displaces RAF1, thus resulting in holoenzyme formation. The polypeptide is Rubisco accumulation factor 1.2, chloroplastic (Arabidopsis thaliana (Mouse-ear cress)).